The primary structure comprises 210 residues: Outer-membrane lipoprotein carrier protein (210 aa).

Positions 1–26 (MHMIRRAAGALAVFAVAALAAAPAWA) are cleaved as a signal peptide.

Belongs to the LolA family. Monomer.

The protein localises to the periplasm. Participates in the translocation of lipoproteins from the inner membrane to the outer membrane. Only forms a complex with a lipoprotein if the residue after the N-terminal Cys is not an aspartate (The Asp acts as a targeting signal to indicate that the lipoprotein should stay in the inner membrane). This is Outer-membrane lipoprotein carrier protein from Bordetella bronchiseptica (strain ATCC BAA-588 / NCTC 13252 / RB50) (Alcaligenes bronchisepticus).